The chain runs to 202 residues: GTP cyclohydrolase 1 (202 aa).

Positions 90, 93, and 163 each coordinate Zn(2+).

It belongs to the GTP cyclohydrolase I family. In terms of assembly, homomer.

It carries out the reaction GTP + H2O = 7,8-dihydroneopterin 3'-triphosphate + formate + H(+). Its pathway is cofactor biosynthesis; 7,8-dihydroneopterin triphosphate biosynthesis; 7,8-dihydroneopterin triphosphate from GTP: step 1/1. The chain is GTP cyclohydrolase 1 from Mycobacterium marinum (strain ATCC BAA-535 / M).